Reading from the N-terminus, the 307-residue chain is MDLILLVGIAVALLVILATLYFLQNKNKAAGEAKPAAAAPRRGVPQRAQEGVPRRAQIARNQRNRLQQNAPAPAPEAVAPAAAGDSDDDEENVGADGARLPQGAVLNEKMGAKKRAKMEAKEQKRLQREHELQEREKRKVKEAKEDAERKQQEEVEAEAERKKLDAERLAKEERERKEHEEYLKMKAAFNVEEEGFEEGDADDQESLLADFIQYIKDNKVVLLEDLAVAFKLKTQQAIERIQELQANGSLTGVIDDRGKFIYISQEELAAVAKFIKQRGRVSIAELAESSNNLINLTPVQSAAGGDS.

Topologically, residues 1-2 (MD) are lumenal. Residues 3-23 (LILLVGIAVALLVILATLYFL) form a helical membrane-spanning segment. The Cytoplasmic portion of the chain corresponds to 24-307 (QNKNKAAGEA…PVQSAAGGDS (284 aa)). Composition is skewed to low complexity over residues 32 to 43 (EAKPAAAAPRRG) and 54 to 83 (RRAQ…PAAA). The tract at residues 32–162 (EAKPAAAAPR…EEVEAEAERK (131 aa)) is disordered. Basic and acidic residues predominate over residues 117–162 (KMEAKEQKRLQREHELQEREKRKVKEAKEDAERKQQEEVEAEAERK).

It belongs to the DDRGK1 family. In terms of assembly, interacts with Atg9; the interaction is transient.

It is found in the endoplasmic reticulum membrane. Substrate adapter for ufmylation, the covalent attachment of the ubiquitin-like modifier UFM1 to substrate proteins. Required for ufmylation of Atg9; protects the nervous system during aging, possibly by stabilizing Atg9 and supporting its function. This chain is DDRGK domain-containing protein 1, found in Drosophila willistoni (Fruit fly).